A 113-amino-acid chain; its full sequence is Transmembrane protein 256 (113 aa).

The signal sequence occupies residues 1 to 29; the sequence is MAGVGAAFRRLGALSGAGALGLASYGAHG. Residues 30 to 63 lie on the Extracellular side of the membrane; that stretch reads AQFPDAYGKELFDKANKHHFLHSLALLGVPSCRK. An N6-acetyllysine modification is found at Lys43. A helical membrane pass occupies residues 64–84; the sequence is PVWAGLLLASGTTLFCTSFYY. The Cytoplasmic segment spans residues 85-92; it reads QALSGDTS. Residues 93–113 traverse the membrane as a helical segment; sequence IQTLGPVGGSLLILGWLALAF.

This sequence belongs to the TMEM256 family.

Its subcellular location is the membrane. The protein is Transmembrane protein 256 (Tmem256) of Mus musculus (Mouse).